We begin with the raw amino-acid sequence, 105 residues long: Nucleoid-associated protein OCAR_7544/OCA5_c05960 (105 aa).

The protein belongs to the YbaB/EbfC family. In terms of assembly, homodimer.

The protein localises to the cytoplasm. It is found in the nucleoid. In terms of biological role, binds to DNA and alters its conformation. May be involved in regulation of gene expression, nucleoid organization and DNA protection. The sequence is that of Nucleoid-associated protein OCAR_7544/OCA5_c05960 from Afipia carboxidovorans (strain ATCC 49405 / DSM 1227 / KCTC 32145 / OM5) (Oligotropha carboxidovorans).